Here is a 406-residue protein sequence, read N- to C-terminus: Pyridinium-3,5-bisthiocarboxylic acid mononucleotide nickel insertion protein (406 aa).

Belongs to the LarC family.

The enzyme catalyses Ni(II)-pyridinium-3,5-bisthiocarboxylate mononucleotide = pyridinium-3,5-bisthiocarboxylate mononucleotide + Ni(2+). In terms of biological role, involved in the biosynthesis of a nickel-pincer cofactor ((SCS)Ni(II) pincer complex). Binds Ni(2+), and functions in nickel delivery to pyridinium-3,5-bisthiocarboxylic acid mononucleotide (P2TMN), to form the mature cofactor. Is thus probably required for the activation of nickel-pincer cofactor-dependent enzymes. This is Pyridinium-3,5-bisthiocarboxylic acid mononucleotide nickel insertion protein from Akkermansia muciniphila (strain ATCC BAA-835 / DSM 22959 / JCM 33894 / BCRC 81048 / CCUG 64013 / CIP 107961 / Muc).